The primary structure comprises 117 residues: Huntingtin-interacting protein M (117 aa).

Disordered regions lie at residues 1–30 (MSEK…VPRS) and 71–117 (EASN…RKND). Polar residues predominate over residues 72–81 (ASNNGSMRNT). Basic and acidic residues predominate over residues 82 to 117 (SQDREREVDNNREPHSAESDVTRFLFDEMPKSRKND).

In terms of assembly, may interact with the N-terminus of HD.

In Homo sapiens (Human), this protein is Huntingtin-interacting protein M.